The primary structure comprises 424 residues: Protein ORF114 (424 aa).

The protein localises to the host cytoplasm. Its function is as follows. Plays a role in per os infectivity in vivo. Facilitates embedding of occlusion-derived viruses (ODVs) into occlusion bodies (OBs). This chain is Protein ORF114, found in Lepidoptera (butterflies and moths).